We begin with the raw amino-acid sequence, 203 residues long: Small ribosomal subunit protein uS4c (203 aa).

The segment at 15-42 (LGALPGLTSKRPRAGSDPRNQELSGNKS) is disordered. Positions 89–150 (MRLDNILFRL…DQKSKAMIQN (62 aa)) constitute an S4 RNA-binding domain.

It belongs to the universal ribosomal protein uS4 family. In terms of assembly, part of the 30S ribosomal subunit. Contacts protein S5. The interaction surface between S4 and S5 is involved in control of translational fidelity.

It localises to the plastid. It is found in the chloroplast. Functionally, one of the primary rRNA binding proteins, it binds directly to 16S rRNA where it nucleates assembly of the body of the 30S subunit. In terms of biological role, with S5 and S12 plays an important role in translational accuracy. The sequence is that of Small ribosomal subunit protein uS4c (rps4) from Oenothera elata subsp. hookeri (Hooker's evening primrose).